Reading from the N-terminus, the 86-residue chain is Toxin 3FTx-Dis4 (86 aa).

The first 19 residues, Met-1–Gly-19, serve as a signal peptide directing secretion. Intrachain disulfides connect Cys-24-Cys-45, Cys-38-Cys-63, and Cys-79-Cys-84.

This sequence belongs to the three-finger toxin family. Ancestral subfamily. In terms of tissue distribution, expressed by the venom gland.

The protein resides in the secreted. This Dispholidus typus (Boomslang) protein is Toxin 3FTx-Dis4.